We begin with the raw amino-acid sequence, 261 residues long: Cytochrome c oxidase subunit 3 (261 aa).

The Mitochondrial matrix portion of the chain corresponds to 1–15; the sequence is MTHQTHAYHMVNPSP. Residues 16–34 traverse the membrane as a helical segment; that stretch reads WPLTGALSALLMTSGLIMW. At 35 to 40 the chain is on the mitochondrial intermembrane side; the sequence is FHFNSM. Residues 41 to 66 traverse the membrane as a helical segment; sequence TLLMLGLTTNMLTMYQWWRDIIREST. Residues 67 to 72 lie on the Mitochondrial matrix side of the membrane; that stretch reads FQGHHT. The chain crosses the membrane as a helical span at residues 73–105; that stretch reads SAVQKGLRYGMILFIISEVLFFTGFFWAFYHSS. Over 106–128 the chain is Mitochondrial intermembrane; the sequence is LAPTPELGGCWPPTGIHPLNPLE. Residues 129-152 form a helical membrane-spanning segment; it reads VPLLNTSVLLASGVSITWAHHSLM. The Mitochondrial matrix segment spans residues 153 to 155; the sequence is EGN. A helical transmembrane segment spans residues 156–183; it reads RNHMLQALFITIALGVYFTLLQASEYYE. Residues 184-190 are Mitochondrial intermembrane-facing; that stretch reads APFTISD. The chain crosses the membrane as a helical span at residues 191 to 223; the sequence is GVYGSTFFVATGFHGLHVIIGSTFLIVCFFRQL. Residues 224–232 lie on the Mitochondrial matrix side of the membrane; the sequence is KFHFTSTHH. Residues 233 to 256 traverse the membrane as a helical segment; it reads FGFEAAAWYWHFVDVVWLFLYVSI. The Mitochondrial intermembrane segment spans residues 257–261; that stretch reads YWWGS.

This sequence belongs to the cytochrome c oxidase subunit 3 family. As to quaternary structure, component of the cytochrome c oxidase (complex IV, CIV), a multisubunit enzyme composed of 14 subunits. The complex is composed of a catalytic core of 3 subunits MT-CO1, MT-CO2 and MT-CO3, encoded in the mitochondrial DNA, and 11 supernumerary subunits COX4I, COX5A, COX5B, COX6A, COX6B, COX6C, COX7A, COX7B, COX7C, COX8 and NDUFA4, which are encoded in the nuclear genome. The complex exists as a monomer or a dimer and forms supercomplexes (SCs) in the inner mitochondrial membrane with NADH-ubiquinone oxidoreductase (complex I, CI) and ubiquinol-cytochrome c oxidoreductase (cytochrome b-c1 complex, complex III, CIII), resulting in different assemblies (supercomplex SCI(1)III(2)IV(1) and megacomplex MCI(2)III(2)IV(2)).

It localises to the mitochondrion inner membrane. The enzyme catalyses 4 Fe(II)-[cytochrome c] + O2 + 8 H(+)(in) = 4 Fe(III)-[cytochrome c] + 2 H2O + 4 H(+)(out). Component of the cytochrome c oxidase, the last enzyme in the mitochondrial electron transport chain which drives oxidative phosphorylation. The respiratory chain contains 3 multisubunit complexes succinate dehydrogenase (complex II, CII), ubiquinol-cytochrome c oxidoreductase (cytochrome b-c1 complex, complex III, CIII) and cytochrome c oxidase (complex IV, CIV), that cooperate to transfer electrons derived from NADH and succinate to molecular oxygen, creating an electrochemical gradient over the inner membrane that drives transmembrane transport and the ATP synthase. Cytochrome c oxidase is the component of the respiratory chain that catalyzes the reduction of oxygen to water. Electrons originating from reduced cytochrome c in the intermembrane space (IMS) are transferred via the dinuclear copper A center (CU(A)) of subunit 2 and heme A of subunit 1 to the active site in subunit 1, a binuclear center (BNC) formed by heme A3 and copper B (CU(B)). The BNC reduces molecular oxygen to 2 water molecules using 4 electrons from cytochrome c in the IMS and 4 protons from the mitochondrial matrix. The sequence is that of Cytochrome c oxidase subunit 3 (MT-CO3) from Damaliscus lunatus (Tsessebe).